A 630-amino-acid polypeptide reads, in one-letter code: Internalin B (630 aa).

The first 30 residues, 1-30 (MKEKHNPRRKYCLISGLAIIFSLWIIIGNG), serve as a signal peptide directing secretion. An LRRNT domain is found at 31-76 (AKVQAETITVSTPIKQIFPDDAFAETIKDNLKKKSVTDAVTQNELN). Ca(2+) contacts are provided by Pro-49, Asp-51, Glu-55, and Asp-59. LRR repeat units follow at residues 75–97 (LNSIDQIIANNSDIKSVQGIQYL), 98–121 (PNVTKLFLNGNKLTDIKPLTNLKN), 123–141 (GWLFLDENKIKDLSSLKDL), 142–163 (KKLKSLSLEHNGISDINGLVHL), 164–187 (PQLESLYLGNNKITDITVLSRLTK), 189–207 (DTLSLEDNQISDIVPLAGL), and 208–231 (TKLQNLYLSKNHISDLRALAGLKN). The segment at 241-319 (ECLNKPINHQ…RFHGRVTQPL (79 aa)) is ig-like region. Residues 241–330 (ECLNKPINHQ…EVYTVSYDVD (90 aa)) enclose the LRRCT domain. Residues 320–392 (KEVYTVSYDV…TLYAVFKAET (73 aa)) form a b repeat region region. GW domains lie at 393 to 467 (TEKT…LDRY), 472 to 550 (YDKG…TFYK), and 553 to 630 (MEKP…RAQK). Residues 399–630 (LTRYVKYIRG…TKAANLRAQK (232 aa)) are GW repeat region, necessary and sufficient for cell surface attachment, interacts with host C1QBP and with heparin.

The protein belongs to the internalin family. As to quaternary structure, monomer. Interacts via its LRR repeats with the extracellular portion of mammalian host MET; MET can bind HGF, its endogenous ligand, and InlB simultaneously. Probably forms a dimer upon interaction with host MET, which subsequently allows dimerization of the host MET and subsequent host signaling; dimerization probably occurs via the convex surface of InlB. Interacts with host complement component 1 Q subcomponent-binding protein (C1QBP). Interacts in vitro with human intestinal mucin-2 (MUC2) but not with mucin-1. It depends on Ca(2+) as a cofactor.

Its subcellular location is the secreted. The protein resides in the cell surface. The protein localises to the cell membrane. Functionally, mediates the entry of L.monocytogenes into normally non-phagocytic mammalian host cells. Its host receptor is hepatocyte growth factor receptor (HGF receptor, a tyrosine kinase, MET) which is tyrosine-phosphorylated in response to InlB in human, green monkey, mouse and dog cell lines. Downstream adapter proteins GAB1 and CBL are phosphorylated in response to InlB, which also causes cell colony scattering. InlB binding to mammalian cells is saturable and inhibited by EDTA; InlB-coated beads can be taken up by host cells. Complement component 1 Q subcomponent-binding protein (gC1q-R, C1QBP) might act as an InlB receptor, leading to activation of PI3-kinase in green monkey cells. Stimulation of Tyr-phosphorylation by InlB is antagonized by C1QBP, showing that potentiation of MET signaling via the GW domains is not mediated by C1QBP; the exact role of C1QBP remains to be determined. Stimulation of Tyr-phosphorylation of MET by InlB is potentiated by the InlB GW domains and glycosaminoglycans such as heparin; exogenously added InlB, or hepatocyte growth factor (HGF) will also substitute for bacterial InlB, suggesting InlB promotes bacterial invasion by mimicking the hormone HGF. May stimulate phosphatidylinositol 4,5-bisphosphate 3-kinase (PI3-kinase) in green monkey cells, has less effect in humans as PI3-kinase is constitutively and highly expressed in Caco cells. Binds heparin; C1QBP and heparin seem to bind to the GW domains. This chain is Internalin B (inlB), found in Listeria monocytogenes serotype 1/2a (strain EGD / Mackaness).